The chain runs to 251 residues: Hydroxyacylglutathione hydrolase (251 aa).

The Zn(2+) site is built by H53, H55, D57, H58, H110, D127, and H165.

Belongs to the metallo-beta-lactamase superfamily. Glyoxalase II family. In terms of assembly, monomer. Zn(2+) is required as a cofactor.

It catalyses the reaction an S-(2-hydroxyacyl)glutathione + H2O = a 2-hydroxy carboxylate + glutathione + H(+). It participates in secondary metabolite metabolism; methylglyoxal degradation; (R)-lactate from methylglyoxal: step 2/2. Its function is as follows. Thiolesterase that catalyzes the hydrolysis of S-D-lactoyl-glutathione to form glutathione and D-lactic acid. This is Hydroxyacylglutathione hydrolase from Salmonella paratyphi C (strain RKS4594).